Reading from the N-terminus, the 886-residue chain is Coatomer subunit gamma (886 aa).

HEAT repeat units lie at residues valine 66–glutamate 103, arginine 288–methionine 325, valine 327–glutamate 359, serine 360–leucine 397, and serine 472–serine 509. The segment at serine 592–alanine 613 is disordered.

The protein belongs to the COPG family. Oligomeric complex that consists of at least the alpha, beta, beta', gamma, delta, epsilon and zeta subunits.

It is found in the cytoplasm. It localises to the golgi apparatus membrane. The protein localises to the cytoplasmic vesicle. The protein resides in the COPI-coated vesicle membrane. The coatomer is a cytosolic protein complex that binds to dilysine motifs and reversibly associates with Golgi non-clathrin-coated vesicles, which further mediate biosynthetic protein transport from the ER, via the Golgi up to the trans Golgi network. Coatomer complex is required for budding from Golgi membranes, and is essential for the retrograde Golgi-to-ER transport of dilysine-tagged proteins. This is Coatomer subunit gamma from Arabidopsis thaliana (Mouse-ear cress).